We begin with the raw amino-acid sequence, 117 residues long: MAVNIYDLAHDLDKGIRETPEFISLQDAYREVNENADAKAKFERFRDVQVTIQEKQMTGQEIDDETVDVAQQVAQEVQENELIVKLMEKEQAMSTIINDLNRIIMTPLQDLYNVAND.

Belongs to the UPF0342 family.

This Listeria monocytogenes serovar 1/2a (strain ATCC BAA-679 / EGD-e) protein is UPF0342 protein lmo2223.